Reading from the N-terminus, the 404-residue chain is Acetate kinase (404 aa).

Residue asparagine 7 coordinates Mg(2+). Residue lysine 14 coordinates ATP. Arginine 95 is a binding site for substrate. Aspartate 152 functions as the Proton donor/acceptor in the catalytic mechanism. ATP-binding positions include 212 to 216, 286 to 288, and 334 to 338; these read HLGNG, DMR, and GIGEN. Glutamate 388 is a binding site for Mg(2+).

This sequence belongs to the acetokinase family. Homodimer. Requires Mg(2+) as cofactor. It depends on Mn(2+) as a cofactor.

It is found in the cytoplasm. It catalyses the reaction acetate + ATP = acetyl phosphate + ADP. It functions in the pathway metabolic intermediate biosynthesis; acetyl-CoA biosynthesis; acetyl-CoA from acetate: step 1/2. In terms of biological role, catalyzes the formation of acetyl phosphate from acetate and ATP. Can also catalyze the reverse reaction. This is Acetate kinase from Lawsonia intracellularis (strain PHE/MN1-00).